The chain runs to 491 residues: Transmembrane protein 200A (491 aa).

Residues 1-61 (MIATGGVITG…RGKIRLYSPS (61 aa)) are Cytoplasmic-facing. The interval 16–41 (RQDSARSQQHVNLSPSPATQEKKPIR) is disordered. Polar residues predominate over residues 20–34 (ARSQQHVNLSPSPAT). The helical transmembrane segment at 62 to 82 (GFFLILGVLISIIGIAMAVLG) threads the bilayer. Over 83–126 (YWPQKEHFIDAETTLSTNETQVIRNEGGVVVRFFEQHLHSDKMK) the chain is Extracellular. Residue Asn100 is glycosylated (N-linked (GlcNAc...) asparagine). Residues 127–147 (MLGPFTMGIGIFIFICANAIL) traverse the membrane as a helical segment. The Cytoplasmic segment spans residues 148–491 (HENRDKETKI…LKRGTSETRF (344 aa)). At Ser350 the chain carries Phosphoserine.

Belongs to the TMEM200 family. In terms of tissue distribution, expressed in cerebellum.

The protein localises to the membrane. This is Transmembrane protein 200A (TMEM200A) from Homo sapiens (Human).